Reading from the N-terminus, the 364-residue chain is Aminomethyltransferase (364 aa).

The protein belongs to the GcvT family. As to quaternary structure, the glycine cleavage system is composed of four proteins: P, T, L and H.

The enzyme catalyses N(6)-[(R)-S(8)-aminomethyldihydrolipoyl]-L-lysyl-[protein] + (6S)-5,6,7,8-tetrahydrofolate = N(6)-[(R)-dihydrolipoyl]-L-lysyl-[protein] + (6R)-5,10-methylene-5,6,7,8-tetrahydrofolate + NH4(+). Its function is as follows. The glycine cleavage system catalyzes the degradation of glycine. In Shigella flexneri, this protein is Aminomethyltransferase.